The sequence spans 313 residues: Formimidoylglutamase (313 aa).

Residues histidine 130, aspartate 155, histidine 157, aspartate 159, aspartate 241, and aspartate 243 each coordinate Mn(2+).

This sequence belongs to the arginase family. Mn(2+) serves as cofactor.

The enzyme catalyses N-formimidoyl-L-glutamate + H2O = formamide + L-glutamate. It participates in amino-acid degradation; L-histidine degradation into L-glutamate; L-glutamate from N-formimidoyl-L-glutamate (hydrolase route): step 1/1. In terms of biological role, catalyzes the conversion of N-formimidoyl-L-glutamate to L-glutamate and formamide. In Salmonella arizonae (strain ATCC BAA-731 / CDC346-86 / RSK2980), this protein is Formimidoylglutamase.